The following is a 382-amino-acid chain: D-galactonate dehydratase (382 aa).

Asp-183 serves as a coordination point for Mg(2+). The active-site Proton donor is His-185. Mg(2+) is bound by residues Glu-209 and Glu-235. His-285 serves as the catalytic Proton acceptor. The tract at residues 361–382 (NENPPDWRNPVWRHSDGSIAEW) is disordered.

It belongs to the mandelate racemase/muconate lactonizing enzyme family. GalD subfamily. Mg(2+) is required as a cofactor.

It carries out the reaction D-galactonate = 2-dehydro-3-deoxy-D-galactonate + H2O. Its pathway is carbohydrate acid metabolism; D-galactonate degradation; D-glyceraldehyde 3-phosphate and pyruvate from D-galactonate: step 1/3. Functionally, catalyzes the dehydration of D-galactonate to 2-keto-3-deoxy-D-galactonate. The protein is D-galactonate dehydratase of Xanthomonas euvesicatoria pv. vesicatoria (strain 85-10) (Xanthomonas campestris pv. vesicatoria).